The sequence spans 276 residues: WIMGHMVNAIYQIDEFVDLGANSIEVDVSFDDNAKPEYTYHGIPCDCRRWCTKWEYFNDFLKALRKATTPGDSKYHEKLVLVVFDLKTNSLYNYQAYDAGKKLAENLLQHYWNNGNNGGRAYIVLSIPNLAHYQLITGFKETLKNKGHPELMDKVGHDFSGNDNIDQVEKAYKKAGVTGHVWQSDGITNCIASFIRGLDRAKKAVKNRDSSNGYINKVYYWTVDKYATTREALDIGVDGIMTNYPDVIANVLNESAYKEKFRLATYDDNPWEAFKN.

His-5 is a catalytic residue. Residues Glu-25 and Asp-27 each contribute to the Mg(2+) site. The active-site Nucleophile is His-41. 2 cysteine pairs are disulfide-bonded: Cys-45/Cys-51 and Cys-47/Cys-190. Asp-85 is a Mg(2+) binding site. A glycan (N-linked (GlcNAc...) asparagine) is linked at Asn-253.

This sequence belongs to the arthropod phospholipase D family. Class II subfamily. The cofactor is Mg(2+). As to expression, expressed by the venom gland.

The protein localises to the secreted. It carries out the reaction an N-(acyl)-sphingosylphosphocholine = an N-(acyl)-sphingosyl-1,3-cyclic phosphate + choline. The catalysed reaction is an N-(acyl)-sphingosylphosphoethanolamine = an N-(acyl)-sphingosyl-1,3-cyclic phosphate + ethanolamine. The enzyme catalyses a 1-acyl-sn-glycero-3-phosphocholine = a 1-acyl-sn-glycero-2,3-cyclic phosphate + choline. It catalyses the reaction a 1-acyl-sn-glycero-3-phosphoethanolamine = a 1-acyl-sn-glycero-2,3-cyclic phosphate + ethanolamine. Functionally, dermonecrotic toxins cleave the phosphodiester linkage between the phosphate and headgroup of certain phospholipids (sphingolipid and lysolipid substrates), forming an alcohol (often choline) and a cyclic phosphate. This toxin acts on sphingomyelin (SM). It may also act on ceramide phosphoethanolamine (CPE), lysophosphatidylcholine (LPC) and lysophosphatidylethanolamine (LPE), but not on lysophosphatidylserine (LPS), and lysophosphatidylglycerol (LPG). It acts by transphosphatidylation, releasing exclusively cyclic phosphate products as second products. Induces dermonecrosis, hemolysis, increased vascular permeability, edema, inflammatory response, and platelet aggregation. The protein is Dermonecrotic toxin LarSicTox-alphaIB2c of Loxosceles arizonica (Arizona brown spider).